The chain runs to 460 residues: Cysteine--tRNA ligase (460 aa).

Residue Cys28 participates in Zn(2+) binding. The 'HIGH' region signature appears at 30–40 (MTVYDYCHLGH). Zn(2+) is bound by residues Cys209, His234, and Glu238. The 'KMSKS' region motif lies at 266–270 (KMSKS). Lys269 serves as a coordination point for ATP.

This sequence belongs to the class-I aminoacyl-tRNA synthetase family. Monomer. Zn(2+) is required as a cofactor.

It localises to the cytoplasm. It carries out the reaction tRNA(Cys) + L-cysteine + ATP = L-cysteinyl-tRNA(Cys) + AMP + diphosphate. In Pseudomonas syringae pv. syringae (strain B728a), this protein is Cysteine--tRNA ligase.